We begin with the raw amino-acid sequence, 232 residues long: MLRGVITDIDGTLTDEKRRLSTAAIETIRKLQEGGIEVVLSSGNTSCLLKGLCKLIGTGGTFIGENGGVYRIGFQGSMQVMANRDIAVKALNLLEEYYGKKGIRLELYSHQERYSDIAFAREVPVEEVRSLLSGWPVDIMDTNFAIHIHEAGIDKGRTFHIVAEQLGIKPDEFLGIGDSENDIGMIKAAGTGCCVANAQEDVRNISDYCSSVPYGEGFVEIMRMYFPHILAR.

Asp8 (nucleophile) is an active-site residue. Residues Asp8 and Asp10 each coordinate Mg(2+). Position 155 (Lys155) interacts with substrate. The Mg(2+) site is built by Asp178 and Asp182.

It belongs to the archaeal SPP-like hydrolase family. Mg(2+) serves as cofactor.

The catalysed reaction is 2-phosphoglycolate + H2O = glycolate + phosphate. Functionally, catalyzes the dephosphorylation of 2-phosphoglycolate. The chain is Phosphoglycolate phosphatase from Methanospirillum hungatei JF-1 (strain ATCC 27890 / DSM 864 / NBRC 100397 / JF-1).